Consider the following 794-residue polypeptide: Zinc finger protein 148 (794 aa).

Lys-6 participates in a covalent cross-link: Glycyl lysine isopeptide (Lys-Gly) (interchain with G-Cter in SUMO2). Ser-51 carries the phosphoserine modification. Residues Lys-88, Lys-115, and Lys-132 each participate in a glycyl lysine isopeptide (Lys-Gly) (interchain with G-Cter in SUMO2) cross-link. The segment at 171–193 (HVCEHCNAAFRTNYHLQRHVFIH) adopts a C2H2-type 1 zinc-finger fold. Thr-194 carries the post-translational modification Phosphothreonine. 2 C2H2-type zinc fingers span residues 199–221 (FQCS…EKIH) and 227–249 (FRCD…KRTH). Phosphoserine is present on Ser-250. Residues 255–278 (YQCEYCLQYFSRTDRVLKHKRMCH) form a C2H2-type 4 zinc finger. A Glycyl lysine isopeptide (Lys-Gly) (interchain with G-Cter in SUMO2) cross-link involves residue Lys-291. Residues 298–346 (EEDSGFSTSPKDNSLPKKKRQKPEKKSSGMDKESVLDKSDTKKDRNDYL) form a disordered region. Ser-301 and Ser-306 each carry phosphoserine. Lys-308 is covalently cross-linked (Glycyl lysine isopeptide (Lys-Gly) (interchain with G-Cter in SUMO2)). Over residues 321–344 (EKKSSGMDKESVLDKSDTKKDRND) the composition is skewed to basic and acidic residues. Lys-356 is covalently cross-linked (Glycyl lysine isopeptide (Lys-Gly) (interchain with G-Cter in SUMO1); alternate). Lys-356 is covalently cross-linked (Glycyl lysine isopeptide (Lys-Gly) (interchain with G-Cter in SUMO2); alternate). Lys-402 is covalently cross-linked (Glycyl lysine isopeptide (Lys-Gly) (interchain with G-Cter in SUMO2)). Ser-412 carries the phosphoserine modification. Glycyl lysine isopeptide (Lys-Gly) (interchain with G-Cter in SUMO2) cross-links involve residues Lys-421 and Lys-424. The span at 574–588 (NSSDVPEVTQSENVG) shows a compositional bias: polar residues. Positions 574–596 (NSSDVPEVTQSENVGSSSQASSS) are disordered. An N6-acetyllysine modification is found at Lys-607. Phosphoserine occurs at positions 665 and 784.

The protein belongs to the krueppel C2H2-type zinc-finger protein family. As to quaternary structure, interacts with HNRNPDL. Interacts with the 5FMC complex; the interaction requires association with CHTOP. Interacts with CAVIN1. Sumoylated with SUMO2. Desumoylated by SENP3, resulting in the stimulation of transcription of its target genes. Expressed in heart, lung, kidney, skeletal muscle, liver, brain and spleen.

The protein resides in the nucleus. Its function is as follows. Involved in transcriptional regulation. Represses the transcription of a number of genes including gastrin, stromelysin and enolase. Binds to the G-rich box in the enhancer region of these genes. This is Zinc finger protein 148 (Znf148) from Rattus norvegicus (Rat).